We begin with the raw amino-acid sequence, 378 residues long: Alanine racemase (378 aa).

The Proton acceptor; specific for D-alanine role is filled by Lys-40. Lys-40 bears the N6-(pyridoxal phosphate)lysine mark. Arg-140 lines the substrate pocket. Catalysis depends on Tyr-270, which acts as the Proton acceptor; specific for L-alanine. Met-317 contributes to the substrate binding site.

This sequence belongs to the alanine racemase family. The cofactor is pyridoxal 5'-phosphate.

It carries out the reaction L-alanine = D-alanine. It functions in the pathway amino-acid biosynthesis; D-alanine biosynthesis; D-alanine from L-alanine: step 1/1. Its function is as follows. Catalyzes the interconversion of L-alanine and D-alanine. May also act on other amino acids. This chain is Alanine racemase (alr), found in Lacticaseibacillus casei (strain BL23) (Lactobacillus casei).